The sequence spans 194 residues: Imidazoleglycerol-phosphate dehydratase (194 aa).

This sequence belongs to the imidazoleglycerol-phosphate dehydratase family.

The protein resides in the cytoplasm. The enzyme catalyses D-erythro-1-(imidazol-4-yl)glycerol 3-phosphate = 3-(imidazol-4-yl)-2-oxopropyl phosphate + H2O. It participates in amino-acid biosynthesis; L-histidine biosynthesis; L-histidine from 5-phospho-alpha-D-ribose 1-diphosphate: step 6/9. The polypeptide is Imidazoleglycerol-phosphate dehydratase (Bacillus cereus (strain AH820)).